We begin with the raw amino-acid sequence, 433 residues long: Putative purine permease YbbY (433 aa).

Residues 1-17 (MFNFAVSRESLLSGFQW) are Periplasmic-facing. A helical membrane pass occupies residues 18 to 38 (FFFIFCNTVVVPPTLLSAFQL). Residues 39-42 (PQSS) lie on the Cytoplasmic side of the membrane. Residues 43–63 (LLTLTQYAFLATALACFAQAF) form a helical membrane-spanning segment. Over 64 to 68 (CGHRR) the chain is Periplasmic. A helical transmembrane segment spans residues 69–89 (AIMEGPGGLWWGTILTITLGE). The Cytoplasmic segment spans residues 90–102 (ASRGTPINDIATS). The helical transmembrane segment at 103 to 123 (LAVGIALSGVLTMLIGFSGLG) threads the bilayer. Over 124–130 (HRLARLF) the chain is Periplasmic. The helical transmembrane segment at 131-151 (TPSVMVLFMLMLGAQLTTIFF) threads the bilayer. Residues 152–169 (KGMLGLPFGIADPNFKIQ) are Cytoplasmic-facing. The helical transmembrane segment at 170–190 (LPPFALSVAVMCLVLAMIIFL) threads the bilayer. At 191–196 (PQRFAR) the chain is on the periplasmic side. A helical membrane pass occupies residues 197 to 217 (YGLLVGTITGWLLWYFCFPSS). Over 218 to 230 (HSLSGELHWQWFP) the chain is Cytoplasmic. Residues 231–251 (LGSGGALSPGIILTAVITGLV) traverse the membrane as a helical segment. Residues 252-288 (NISNTYGAIRGTDVFYPQQGAGNTRYRRSFVATGFMT) lie on the Periplasmic side of the membrane. A helical membrane pass occupies residues 289 to 309 (LITVPLAVIPFSPFVSSIGLL). Residues 310–319 (TQTGDYTRRS) are Cytoplasmic-facing. A helical transmembrane segment spans residues 320-340 (FIYGSVICLLVALVPALTRLF). Over 341 to 345 (CSIPL) the chain is Periplasmic. The chain crosses the membrane as a helical span at residues 346–366 (PVSSAVMLVSYLPLLFSALVF). The Cytoplasmic segment spans residues 367–379 (SQQITFTARNIYR). Residues 380–400 (LALPLFVGIFLMALPPVYLQD) form a helical membrane-spanning segment. The Periplasmic segment spans residues 401–407 (LPLTLRP). Residues 408-428 (LLSNGLLVGILLAVLMDNLIP) traverse the membrane as a helical segment. Residues 429–433 (WERIE) lie on the Cytoplasmic side of the membrane.

Belongs to the nucleobase:cation symporter-2 (NCS2) (TC 2.A.40) family.

Its subcellular location is the cell inner membrane. This chain is Putative purine permease YbbY (ybbY), found in Escherichia coli (strain K12).